We begin with the raw amino-acid sequence, 124 residues long: Riboflavin kinase (124 aa).

10 to 15 (GLGKAA) is a CDP binding site. Mg(2+) contacts are provided by Thr39 and Asn41. 2 residues coordinate FMN: Thr93 and Glu101. Residue 106 to 109 (DKLR) participates in CDP binding.

Belongs to the archaeal riboflavin kinase family. The cofactor is Mg(2+).

The catalysed reaction is riboflavin + CTP = CDP + FMN + H(+). Its pathway is cofactor biosynthesis; FMN biosynthesis; FMN from riboflavin (CTP route): step 1/1. Functionally, catalyzes the CTP-dependent phosphorylation of riboflavin (vitamin B2) to form flavin mononucleotide (FMN). The protein is Riboflavin kinase of Methanobrevibacter smithii (strain ATCC 35061 / DSM 861 / OCM 144 / PS).